The primary structure comprises 80 residues: Putative membrane protein insertion efficiency factor (80 aa).

Belongs to the UPF0161 family.

It is found in the cell inner membrane. Could be involved in insertion of integral membrane proteins into the membrane. This is Putative membrane protein insertion efficiency factor from Syntrophobacter fumaroxidans (strain DSM 10017 / MPOB).